Here is a 917-residue protein sequence, read N- to C-terminus: MATEAFVKPVVPNGHDGYEDEDEDDIPLVFKRNSNTAATTNRPSPINNAMRNSAIGSTKSSPPMRSPLTSPNRSASSSTRSSMMKPALPSSSSVQRSTLKSPLRDDRSVVAKERNGFGKAPSVSKSDDEDSEDDKPLSARLKLDSKEVTKQPSSSGRGSTQQAVQKSNMRPQGLSDYTKKKVLDERAPMSSTVQTKTSVGTSSSKPVHIEQKRPLVNNIDRNGLKPKTEGHSSQAPAKRPLEKGSSSNQSSVKRPKLSEPARPVKVEQGSHISATQDAKGKNLDASKPLRANQATVKEDNSDGDDHVPIASRMKSDSSNNKSSSAKPSSSKMIASSSRTIAQKPNKWVKDSKYSKSSKSLPSGDGQKKWKTLQHNGVIFPPPYKRHGVKILFQGKPVDLTPEQEEVATMFAVMRETEYYKKPKFRENFWNDWRKLLGKNHMIKSLDDCDFTPIYEWYMQEKETKKQMTAEEKRIVKEEKLKQEEKYMWAVLDGVRERIGNFRVEPPGLFRGRGEHPKMGKLKKRIRPCDITINIGKEAPIPECPIPGERWKEVKHDNTVTWLAFWSDPINPKEFKYVFLAASSSLKGQSDKEKYEKARKLHNHIGSIRAAYTKDFNNKDVTKRQIAVATYLIDKLALRAGNEKDDDEADTVGCCTLKVGNVECIPPNKLKFDFLGKDSIQYVNTVEVEPLVYKAIGQFQAGKSKTDDLFDELDTSKLNTHLKELMAGLTAKVFRTYNASITLDLMLSKETRDGDVPEKVVVYQQANKEVAIICNHQRTVSKSHGAQVEKLAVKIEELREQIKELNIDLDRAKKGRTPLMGSDGKRKRNLTPEALEKKIMQTQGKIEKMERDMQTKEDMKTVALGTSKINYMDPRITVAWCKRHDVPIEKIFNKSLLAKFAWAMDVDPEFRFCSSTDE.

The disordered stretch occupies residues 1-368 (MATEAFVKPV…SLPSGDGQKK (368 aa)). The segment covering 32 to 63 (RNSNTAATTNRPSPINNAMRNSAIGSTKSSPP) has biased composition (polar residues). The span at 66 to 82 (SPLTSPNRSASSSTRSS) shows a compositional bias: low complexity. Residues 89–100 (PSSSSVQRSTLK) show a composition bias toward polar residues. 2 stretches are compositionally biased toward basic and acidic residues: residues 102 to 116 (PLRD…ERNG) and 134 to 149 (DKPL…KEVT). Over residues 150–170 (KQPSSSGRGSTQQAVQKSNMR) the composition is skewed to polar residues. The span at 177-187 (YTKKKVLDERA) shows a compositional bias: basic and acidic residues. Residues 189–205 (MSSTVQTKTSVGTSSSK) show a composition bias toward polar residues. Composition is skewed to basic and acidic residues over residues 256 to 265 (KLSEPARPVK) and 296 to 307 (VKEDNSDGDDHV). S301 is subject to Phosphoserine. A compositionally biased stretch (low complexity) spans 316–338 (DSSNNKSSSAKPSSSKMIASSSR). 3 interaction with DNA regions span residues 575–576 (KY), 638–643 (RAGNEK), and 729–731 (TAK). One can recognise a Topo IB-type catalytic domain in the interval 582-912 (SSSLKGQSDK…MDVDPEFRFC (331 aa)). Residues 779 to 858 (VSKSHGAQVE…ERDMQTKEDM (80 aa)) adopt a coiled-coil conformation. Y870 functions as the O-(3'-phospho-DNA)-tyrosine intermediate in the catalytic mechanism.

Belongs to the type IB topoisomerase family.

The protein localises to the nucleus. The enzyme catalyses ATP-independent breakage of single-stranded DNA, followed by passage and rejoining.. Its function is as follows. Releases the supercoiling and torsional tension of DNA introduced during the DNA replication and transcription by transiently cleaving and rejoining one strand of the DNA duplex. Introduces a single-strand break via transesterification at a target site in duplex DNA. The scissile phosphodiester is attacked by the catalytic tyrosine of the enzyme, resulting in the formation of a DNA-(3'-phosphotyrosyl)-enzyme intermediate and the expulsion of a 5'-OH DNA strand. The free DNA strand then rotates around the intact phosphodiester bond on the opposing strand, thus removing DNA supercoils. Finally, in the religation step, the DNA 5'-OH attacks the covalent intermediate to expel the active-site tyrosine and restore the DNA phosphodiester backbone. Topoisomerases 1 enzymes (TOP1A and TOP1B) are essential for plant survival. This Arabidopsis thaliana (Mouse-ear cress) protein is DNA topoisomerase 1 beta.